A 264-amino-acid polypeptide reads, in one-letter code: 14-3-3-like protein GF14-A (264 aa).

Positions 245-264 (DMQDDGGDEMRDATKPEDEH) are disordered. Over residues 252–264 (DEMRDATKPEDEH) the composition is skewed to basic and acidic residues.

Belongs to the 14-3-3 family.

In terms of biological role, is associated with a DNA binding complex that binds to the G box, a well-characterized cis-acting DNA regulatory element found in plant genes. This chain is 14-3-3-like protein GF14-A (GF14A), found in Oryza sativa subsp. japonica (Rice).